Reading from the N-terminus, the 241-residue chain is RecQ-mediated genome instability protein 1 (241 aa).

It belongs to the RMI1 family. Forms a complex with SGS1 and TOP3.

The protein localises to the cytoplasm. It localises to the nucleus. Structure-specific DNA-binding protein with a preference for cruciform structures. Also binds single-stranded DNA (ssDNA). Functions together with SGS1 and TOP3 to maintain genome integrity. Essential for proper meiotic cell division. Required for normal S-phase progression and DNA damage response. Required for resistance to the DNA-damaging agent methyl methanesulfonate (MMS). This chain is RecQ-mediated genome instability protein 1, found in Saccharomyces cerevisiae (strain ATCC 204508 / S288c) (Baker's yeast).